A 213-amino-acid polypeptide reads, in one-letter code: Leucyl/phenylalanyl-tRNA--protein transferase (213 aa).

The protein belongs to the L/F-transferase family.

The protein resides in the cytoplasm. It catalyses the reaction N-terminal L-lysyl-[protein] + L-leucyl-tRNA(Leu) = N-terminal L-leucyl-L-lysyl-[protein] + tRNA(Leu) + H(+). It carries out the reaction N-terminal L-arginyl-[protein] + L-leucyl-tRNA(Leu) = N-terminal L-leucyl-L-arginyl-[protein] + tRNA(Leu) + H(+). The enzyme catalyses L-phenylalanyl-tRNA(Phe) + an N-terminal L-alpha-aminoacyl-[protein] = an N-terminal L-phenylalanyl-L-alpha-aminoacyl-[protein] + tRNA(Phe). Its function is as follows. Functions in the N-end rule pathway of protein degradation where it conjugates Leu, Phe and, less efficiently, Met from aminoacyl-tRNAs to the N-termini of proteins containing an N-terminal arginine or lysine. This chain is Leucyl/phenylalanyl-tRNA--protein transferase, found in Rhodospirillum rubrum (strain ATCC 11170 / ATH 1.1.1 / DSM 467 / LMG 4362 / NCIMB 8255 / S1).